We begin with the raw amino-acid sequence, 1073 residues long: Serine/threonine-protein phosphatase 6 regulatory ankyrin repeat subunit C (1073 aa).

28 ANK repeats span residues 7-36 (TDQPPLVQAIFNRDVEEVRSLLNQKENINV), 40-69 (ERRTPLHTAAYIGDVAILELLILSGANVNA), 73-102 (VWLTPLHRAAASRNEKALHLLLKHSADVNA), 106-135 (YWQTPLHVAAANRATKCVEAIIPLLSTVNV), 139-168 (TGRTALHHAVHSGHLEMVNLLLNKGASLST), 172-201 (KDRQPIHWAAFLGHLEVLKLLVARGADVMC), 205-234 (KGYTLLHTAAASGQIEVVRHLLRLGVEIDE), 238-267 (FGNTALHIACYMGQDAVANELVNYGANVNQ), 271-301 (KGFTPLHFAAVSTNGALCLELLVNNGADVNF), 305-334 (EGKSPLHMAAIHGRFTRSQILIQNGSEIDC), 338-367 (YGNTPLHVAARYGHELLISTLMTNGADTAR), 371-400 (HDMFPLHLAVLFGFSDCCRKLLSSGQLYSI), 422-451 (LGRTCLHAAASGGNVECLNLLLSSGADLRR), 455-484 (FGRTPLHYAAANGSYQCTVTLVTAGASINE), 488-544 (KGCT…DPSL), 548-578 (QGYTAVHYAAAYGNRQNLELLLEMSFNCLED), 583-612 (IPVSPLHLAAYNGHCEALKTLAETLVNLDV), 616-645 (KGRTALYLATERGSTECVEVLTSHGASALV), 650-679 (RKWTPLHAAAANGNTDSLHLLIDSGERADI), 686-715 (HGQTPLMLAIMNGHVDCVHLLLEKGSTADA), 719-748 (RGRTALHRGAVTGCEDCLAALLDHDAFVLC), 752-781 (KGRTPIHFASACGHLEILRTLLQAALSTDP), 789-818 (SGYSPMHWASYSGHEDCLELLLEHNPFAYL), 821-851 (NPFTPLHCAVINNQDSTAEMLVEALGAKIVN), 856-885 (KGRTPLHAAAFADNIHGLQLLLRHQAEVDT), 889-919 (LGRTPLMMASENGHTAAVEFLLYQAKANITV), 923-952 (NKNTALHLACSKGHEKCALLILGETQDLGL), and 959-988 (ALQMPLHIAARNGLATVVQALLSRGATVLA).

As to quaternary structure, protein phosphatase 6 (PP6) holoenzyme is proposed to be a heterotrimeric complex formed by the catalytic subunit, a SAPS domain-containing subunit (PP6R) and an ankyrin repeat-domain containing regulatory subunit (ARS).

Putative regulatory subunit of protein phosphatase 6 (PP6) that may be involved in the recognition of phosphoprotein substrates. The polypeptide is Serine/threonine-protein phosphatase 6 regulatory ankyrin repeat subunit C (ANKRD52) (Gallus gallus (Chicken)).